The chain runs to 346 residues: Iron uptake protein A2 (346 aa).

Residues 1-31 (MTTKISRRTFFVGGTALTALVVANLPRRASA) constitute a signal peptide (tat-type signal). The Fe cation site is built by H43, Y44, Y169, Y225, and Y226.

The protein belongs to the bacterial solute-binding protein 1 family. Predicted to be exported by the Tat system. The position of the signal peptide cleavage has not been experimentally proven.

The protein localises to the cellular thylakoid membrane. The protein resides in the periplasm. Functionally, probably part of a periplasmic ABC transporter complex futA1A2BC (TC 3.A.1.10.2) involved in Fe(3+) ion import (ferric iron). This protein and futA1 (slr1295) are subunit proteins that have redundant or overlapping substrate-binding functions. The differing subcellular locations of futA1 (predominantly thylakoid lumen) and futA2 (predominantly periplasmic) suggest they may fulfill different roles. Plays an important role in protecting the acceptor side of photosystem II (PSII) against oxidative damage, especially under iron-limiting growth conditions. In terms of biological role, plays an undefined role in copper supply to thylakoid proteins. In Synechocystis sp. (strain ATCC 27184 / PCC 6803 / Kazusa), this protein is Iron uptake protein A2 (futA2).